The chain runs to 251 residues: Type III pantothenate kinase (251 aa).

6-13 serves as a coordination point for ATP; the sequence is DCGNSFIK. Substrate contacts are provided by residues Tyr-93 and 100-103; that span reads GLDR. Asp-102 acts as the Proton acceptor in catalysis. Residue Asp-122 coordinates K(+). Thr-125 contributes to the ATP binding site. Thr-182 is a binding site for substrate.

This sequence belongs to the type III pantothenate kinase family. Homodimer. The cofactor is NH4(+). K(+) is required as a cofactor.

Its subcellular location is the cytoplasm. It carries out the reaction (R)-pantothenate + ATP = (R)-4'-phosphopantothenate + ADP + H(+). It functions in the pathway cofactor biosynthesis; coenzyme A biosynthesis; CoA from (R)-pantothenate: step 1/5. Its function is as follows. Catalyzes the phosphorylation of pantothenate (Pan), the first step in CoA biosynthesis. The polypeptide is Type III pantothenate kinase (Azotobacter vinelandii (strain DJ / ATCC BAA-1303)).